Here is a 263-residue protein sequence, read N- to C-terminus: Single-stranded DNA-binding protein WHY1, chloroplastic (263 aa).

The transit peptide at 1-47 directs the protein to the chloroplast; sequence MSQLLSTPLMAVNSNPRFLSSSSVLVTGGFAVKRHGFALKPTTKTVK. Residues 89–94 form a required for ssDNA binding region; that stretch reads KGKAAL. The Nuclear localization signal signature appears at 167–180; it reads KGKSDEGKVRKVLK.

It belongs to the Whirly family. As to quaternary structure, homotetramer.

The protein resides in the plastid. It localises to the chloroplast. It is found in the nucleus. In terms of biological role, single-stranded DNA-binding protein that functions in both chloroplasts and nucleus. In chloroplasts, maintains plastid genome stability by preventing break-induced and short homology-dependent illegitimate recombinations. In nucleus, modulates telomere length homeostasis by inhibiting the action of the telomerase at the extreme termini of chromosomes. Is recruited to a distal element upstream of the kinesin KP1 to mediate the transcriptional repression of KP1. Is required for full salicylic acid-dependent plant disease resistance responses. Can bind double-stranded DNA in vivo. The protein is Single-stranded DNA-binding protein WHY1, chloroplastic (WHY1) of Arabidopsis thaliana (Mouse-ear cress).